Consider the following 922-residue polypeptide: Lysine-specific demethylase 7A (922 aa).

Residues 6-57 form a PHD-type zinc finger; sequence PVYCVCRQPYDVSRFMIECDICKDWFHSSCVKVEEHQAADIDLYHCPNCEVL. One can recognise a JmjC domain in the interval 199 to 355; that stretch reads FSDTKMADLV…MQLRCYEMEK (157 aa). Residue Thr-248 participates in substrate binding. The Fe cation site is built by His-251 and Asp-253. Residue Lys-268 participates in substrate binding. His-323 contacts Fe cation. 5 disordered regions span residues 445–490, 565–607, 622–711, 754–773, and 872–902; these read EEEG…TKTP, RSLY…TQKP, GSSE…EQEA, GKEH…HHVK, and LHPT…MATA. Residues 473-483 are compositionally biased toward basic residues; it reads HHSGRKARRLR. Residues 648 to 666 show a composition bias toward acidic residues; it reads ESESSGDDDDEEEEEEEER. Composition is skewed to basic and acidic residues over residues 667–683 and 691–701; these read QEPI…RRLP and PDHDSPQKREC.

Belongs to the JHDM1 histone demethylase family. JHDM1D subfamily. Requires Fe(2+) as cofactor.

Its subcellular location is the nucleus. Its function is as follows. Histone demethylase required for brain development. Specifically demethylates dimethylated 'Lys-9' and 'Lys-27' (H3K9me2 and H3K27me2, respectively) of histone H3 and monomethylated histone H4 'Lys-20' residue (H4K20Me1), thereby playing a central role in histone code. This chain is Lysine-specific demethylase 7A (kdm7a), found in Xenopus tropicalis (Western clawed frog).